The sequence spans 99 residues: Acylphosphatase (99 aa).

The Acylphosphatase-like domain maps to 5–97 (VRQVTVQGRV…RPGERFSTLP (93 aa)). Active-site residues include R20 and N38.

This sequence belongs to the acylphosphatase family.

The catalysed reaction is an acyl phosphate + H2O = a carboxylate + phosphate + H(+). This Rhodopseudomonas palustris (strain BisB18) protein is Acylphosphatase (acyP).